The primary structure comprises 430 residues: Aspartate aminotransferase, mitochondrial (430 aa).

Residues 1-28 (MALAMMIRNAASKRGMTPISGHFGGLRS) constitute a mitochondrion transit peptide. Positions 65, 160, and 213 each coordinate L-aspartate. At lysine 277 the chain carries N6-(pyridoxal phosphate)lysine. Arginine 405 provides a ligand contact to L-aspartate.

This sequence belongs to the class-I pyridoxal-phosphate-dependent aminotransferase family. As to quaternary structure, homodimer. It depends on pyridoxal 5'-phosphate as a cofactor.

The protein localises to the mitochondrion matrix. The enzyme catalyses L-aspartate + 2-oxoglutarate = oxaloacetate + L-glutamate. Functionally, amino acid aminotransferase important for the metabolism of amino acids and Krebs-cycle related organic acids. No activity with D-Asp or D-Ala as amino donors. In plants, it is involved in nitrogen metabolism and in aspects of carbon and energy metabolism. The chain is Aspartate aminotransferase, mitochondrial (ASP1) from Arabidopsis thaliana (Mouse-ear cress).